The primary structure comprises 76 residues: Small ribosomal subunit protein bS18 (76 aa).

The protein belongs to the bacterial ribosomal protein bS18 family. As to quaternary structure, part of the 30S ribosomal subunit. Forms a tight heterodimer with protein bS6.

Its function is as follows. Binds as a heterodimer with protein bS6 to the central domain of the 16S rRNA, where it helps stabilize the platform of the 30S subunit. The protein is Small ribosomal subunit protein bS18 of Aeromonas salmonicida (strain A449).